Here is a 332-residue protein sequence, read N- to C-terminus: 2,3-diketo-L-gulonate reductase (332 aa).

Histidine 44 serves as the catalytic Proton donor. Residues isoleucine 168–serine 174, tryptophan 224–lysine 225, and glycine 304–glutamate 306 each bind NAD(+).

The protein belongs to the LDH2/MDH2 oxidoreductase family. DlgD subfamily. As to quaternary structure, homodimer.

It localises to the cytoplasm. The enzyme catalyses 3-dehydro-L-gulonate + NAD(+) = 2,3-dioxo-L-gulonate + NADH + H(+). It catalyses the reaction 3-dehydro-L-gulonate + NADP(+) = 2,3-dioxo-L-gulonate + NADPH + H(+). Functionally, catalyzes the reduction of 2,3-diketo-L-gulonate in the presence of NADH, to form 3-keto-L-gulonate. In Klebsiella oxytoca, this protein is 2,3-diketo-L-gulonate reductase.